The following is a 234-amino-acid chain: Peptidyl-prolyl cis-trans isomerase, rhodopsin-specific isozyme (234 aa).

The first 19 residues, 1–19 (MNILKILILLELIYTCVSG), serve as a signal peptide directing secretion. Residues 29–187 (YMDVKHQKKP…DPVIIVNCGE (159 aa)) enclose the PPIase cyclophilin-type domain. A glycan (N-linked (GlcNAc...) asparagine) is linked at asparagine 67. Residues 202–222 (ILGWIKAAGLPFCSSFIVLMI) traverse the membrane as a helical segment.

It belongs to the cyclophilin-type PPIase family. In terms of tissue distribution, expressed specifically in photoreceptor cells.

It localises to the membrane. The catalysed reaction is [protein]-peptidylproline (omega=180) = [protein]-peptidylproline (omega=0). Functionally, PPIases accelerate the folding of proteins. It catalyzes the cis-trans isomerization of proline imidic peptide bonds in oligopeptides. Acts on the folding of rhodopsin RH1 and RH2 (but not RH3) and is required for visual transduction. This Calliphora vicina (Blue blowfly) protein is Peptidyl-prolyl cis-trans isomerase, rhodopsin-specific isozyme (NINAA).